We begin with the raw amino-acid sequence, 471 residues long: Adenosylhomocysteinase (471 aa).

The substrate site is built by threonine 60, aspartate 135, and glutamate 196. Position 197 to 199 (threonine 197 to threonine 199) interacts with NAD(+). Residues lysine 226 and aspartate 230 each coordinate substrate. Residues asparagine 231, glycine 260–glycine 265, glutamate 283, asparagine 318, isoleucine 339–histidine 341, and asparagine 387 contribute to the NAD(+) site.

This sequence belongs to the adenosylhomocysteinase family. Requires NAD(+) as cofactor.

It is found in the cytoplasm. The enzyme catalyses S-adenosyl-L-homocysteine + H2O = L-homocysteine + adenosine. The protein operates within amino-acid biosynthesis; L-homocysteine biosynthesis; L-homocysteine from S-adenosyl-L-homocysteine: step 1/1. May play a key role in the regulation of the intracellular concentration of adenosylhomocysteine. This is Adenosylhomocysteinase from Pelodictyon phaeoclathratiforme (strain DSM 5477 / BU-1).